An 852-amino-acid polypeptide reads, in one-letter code: Disrupted in schizophrenia 1 homolog (852 aa).

Disordered regions lie at residues 1-86, 236-264, and 280-320; these read MQGG…GLDP, EAEP…PRHL, and QVTR…QGGG. Residues 1–294 form an interaction with MAP1A region; that stretch reads MQGGGPRGAP…SSRQSECGTV (294 aa). Polar residues predominate over residues 65 to 79; the sequence is AGLTGQQSQHSQSKA. The segment covering 253–263 has biased composition (basic and acidic residues); it reads SSDRPHGDPRH. Over residues 288 to 311 the composition is skewed to low complexity; the sequence is QSECGTVSSSSSDTGFSSQDASSA. An interaction with TRAF3IP1 region spans residues 295-693; the sequence is SSSSSDTGFS…LGRVWKADLE (399 aa). 2 coiled-coil regions span residues 367–397 and 449–496; these read EDGD…ALPS and ITRR…LLRW. Residues 437-594 are required for localization to punctate cytoplasmic foci; the sequence is LRTTAQDSLP…LLEAKMLALS (158 aa). The necessary and sufficient for interaction with PCNT and localization at the centrosome stretch occupies residues 443–852; that stretch reads DSLPASITRR…PTAGAQETEA (410 aa). The interaction with ATF4 and ATF5 stretch occupies residues 595–852; sequence GSCFSTAKEL…PTAGAQETEA (258 aa). 2 disordered regions span residues 706-746 and 833-852; these read EAGS…KSPL and KEAG…ETEA. The segment at 728-852 is interaction with NDEL1 and PAFAH1B1; that stretch reads TAALAVPRTP…PTAGAQETEA (125 aa). Residues 728–852 form an interaction with PAFAH1B1 region; that stretch reads TAALAVPRTP…PTAGAQETEA (125 aa). Residues 802-835 form an interaction with NDEL1 region; sequence SHDEALFQSLQGELQTVKETLQAMILQLQPTKEA.

Interacts with NDEL1. Interacts with CCDC88A (via C-terminus); the interaction is direct. Interacts with GSK3B. Interacts with tubulin alpha, ACTN2, ANKHD1, ATF4, ATF5, CEP63, EIF3S3, MAP1A, NDEL1, PAFAH1B1, RANBP9, SPTBN4, SYNE1 and TRAF3IP1. Interaction with microtubules may be mediated in part by TRAF3IP1. Interacts (via C-terminal) with PCNT. Interacts with CHCHD6. Interacts with CCDC141. Interacts with FBXW7, the substrate-recognition component of a SCF (SKP1-CUL1-F-box protein) E3 ubiquitin-protein ligase complex; the interaction targets DISC1 for proteasomal degradation. Interacts with ZNF365. Interacts with ATF4; inhibiting ATF4 transcription factor activity by disrupting ATF4 dimerization and DNA-binding. Interacts with PDE4B. In terms of processing, ubiquitinated. Ubiquitination with 'Lys-48'-linked polyubiquitin chains leads to its proteasomal degradation. As to expression, expressed in granule cell precursors within the dentate migratory stream during the first week of postnatal life and in differentiated granule cells of the hippocampus (at protein level). Detected in heart, brain, kidney, and testis. Expressed in dentate gyrus, hippocampus and in the olfactory bulb.

The protein localises to the cytoplasm. It is found in the cytoskeleton. The protein resides in the mitochondrion. Its subcellular location is the microtubule organizing center. It localises to the centrosome. The protein localises to the postsynaptic density. Involved in the regulation of multiple aspects of embryonic and adult neurogenesis. Required for neural progenitor proliferation in the ventrical/subventrical zone during embryonic brain development and in the adult dentate gyrus of the hippocampus. Participates in the Wnt-mediated neural progenitor proliferation as a positive regulator by modulating GSK3B activity and CTNNB1 abundance. Plays a role as a modulator of the AKT-mTOR signaling pathway controlling the tempo of the process of newborn neurons integration during adult neurogenesis, including neuron positioning, dendritic development and synapse formation. Inhibits the activation of AKT-mTOR signaling upon interaction with CCDC88A. Regulates the migration of early-born granule cell precursors toward the dentate gyrus during the hippocampal development. Inhibits ATF4 transcription factor activity in neurons by disrupting ATF4 dimerization and DNA-binding. Plays a role, together with PCNT, in the microtubule network formation. The chain is Disrupted in schizophrenia 1 homolog from Mus musculus (Mouse).